Here is a 69-residue protein sequence, read N- to C-terminus: Cytochrome c oxidase subunit 8A, mitochondrial (69 aa).

The N-terminal 25 residues, 1-25 (MSVLTPLLLRGLTGSARRLPVPRAQ), are a transit peptide targeting the mitochondrion. An SIFI-degron motif is present at residues 2–19 (SVLTPLLLRGLTGSARRL). Topologically, residues 26-36 (VHSMPPEQKLG) are mitochondrial matrix. A helical membrane pass occupies residues 37 to 60 (VLELAIGFTSCLVTFLLPAGWILS). Topologically, residues 61 to 69 (HLDSYKKRG) are mitochondrial intermembrane.

This sequence belongs to the cytochrome c oxidase VIII family. Component of the cytochrome c oxidase (complex IV, CIV), a multisubunit enzyme composed of 14 subunits. The complex is composed of a catalytic core of 3 subunits MT-CO1, MT-CO2 and MT-CO3, encoded in the mitochondrial DNA, and 11 supernumerary subunits COX4I, COX5A, COX5B, COX6A, COX6B, COX6C, COX7A, COX7B, COX7C, COX8 and NDUFA4, which are encoded in the nuclear genome. The complex exists as a monomer or a dimer and forms supercomplexes (SCs) in the inner mitochondrial membrane with NADH-ubiquinone oxidoreductase (complex I, CI) and ubiquinol-cytochrome c oxidoreductase (cytochrome b-c1 complex, complex III, CIII), resulting in different assemblies (supercomplex SCI(1)III(2)IV(1) and megacomplex MCI(2)III(2)IV(2)). In response to mitochondrial stress, the precursor protein is ubiquitinated by the SIFI complex in the cytoplasm before mitochondrial import, leading to its degradation. Within the SIFI complex, UBR4 initiates ubiquitin chain that are further elongated or branched by KCMF1.

The protein resides in the mitochondrion inner membrane. Its pathway is energy metabolism; oxidative phosphorylation. Its function is as follows. Component of the cytochrome c oxidase, the last enzyme in the mitochondrial electron transport chain which drives oxidative phosphorylation. The respiratory chain contains 3 multisubunit complexes succinate dehydrogenase (complex II, CII), ubiquinol-cytochrome c oxidoreductase (cytochrome b-c1 complex, complex III, CIII) and cytochrome c oxidase (complex IV, CIV), that cooperate to transfer electrons derived from NADH and succinate to molecular oxygen, creating an electrochemical gradient over the inner membrane that drives transmembrane transport and the ATP synthase. Cytochrome c oxidase is the component of the respiratory chain that catalyzes the reduction of oxygen to water. Electrons originating from reduced cytochrome c in the intermembrane space (IMS) are transferred via the dinuclear copper A center (CU(A)) of subunit 2 and heme A of subunit 1 to the active site in subunit 1, a binuclear center (BNC) formed by heme A3 and copper B (CU(B)). The BNC reduces molecular oxygen to 2 water molecules using 4 electrons from cytochrome c in the IMS and 4 protons from the mitochondrial matrix. The chain is Cytochrome c oxidase subunit 8A, mitochondrial (COX8A) from Saimiri sciureus (Common squirrel monkey).